A 158-amino-acid chain; its full sequence is Placenta growth factor (158 aa).

The first 18 residues, 1 to 18, serve as a signal peptide directing secretion; the sequence is MLVMKLFTCFLQVLAGLA. N-linked (GlcNAc...) asparagine glycosylation is found at Asn-29 and Asn-30. 3 disulfide bridges follow: Cys-48/Cys-90, Cys-79/Cys-125, and Cys-83/Cys-127. Asn-97 is a glycosylation site (N-linked (GlcNAc...) asparagine). A disordered region spans residues 136-158; it reads AERRKTKGKRKRSRNSQTEEPHP. Positions 137-149 are enriched in basic residues; sequence ERRKTKGKRKRSR.

Belongs to the PDGF/VEGF growth factor family. As to quaternary structure, antiparallel homodimer; disulfide-linked. Also found as heterodimer with VEGFA/VEGF.

It localises to the secreted. Its function is as follows. Growth factor active in angiogenesis and endothelial cell growth, stimulating their proliferation and migration. It binds to the receptor FLT1/VEGFR-1. Also promotes cell tumor growth. The chain is Placenta growth factor (Pgf) from Mus musculus (Mouse).